Consider the following 496-residue polypeptide: FAD-linked oxidoreductase AFUA_1G00980 (496 aa).

The N-terminal stretch at 1 to 21 (MRRATLIPLAIWVAGAAAAAA) is a signal peptide. Asparagine 49, asparagine 122, asparagine 205, asparagine 258, asparagine 344, asparagine 351, asparagine 371, and asparagine 382 each carry an N-linked (GlcNAc...) asparagine glycan. Residues 64 to 243 (MAPTYAVSVR…VEAVYQVTDL (180 aa)) enclose the FAD-binding PCMH-type domain.

Belongs to the oxygen-dependent FAD-linked oxidoreductase family. It depends on FAD as a cofactor.

FAD-linked oxidoreductase; part of the gene cluster that mediates the biosynthesis of fumigermin that inhibits germination of spores of the inducing S.rapamycinicus, and thus helps the fungus to defend resources in the shared habitat against a bacterial competitor. The partially reducing polyketide synthase fngA alone is sufficient for the production of fumigermin. FgnA catalyzes the condensation of 3 malonyl-CoA units to an acetyl-CoA starter, and 3 methylations to yield fumigermin. It is remarkable that the five cluster genes including fgnA are conserved in distantly related fungi, supporting the assumption of a fumigermin cluster; it is thus possible that originally all five genes were functional, but that the genes encoding tailoring enzymes became inactive from mutations, similar to the case of the fgnA gene in strains A1163 and Af293. This is FAD-linked oxidoreductase AFUA_1G00980 from Aspergillus fumigatus (strain ATCC MYA-4609 / CBS 101355 / FGSC A1100 / Af293) (Neosartorya fumigata).